The primary structure comprises 443 residues: Putative rhamnogalacturonase D (443 aa).

The N-terminal stretch at M1–A16 is a signal peptide. C37 and C63 form a disulfide bridge. Residues N47, N103, N124, and N152 are each glycosylated (N-linked (GlcNAc...) asparagine). The Proton donor role is filled by D215. C217 and C234 are disulfide-bonded. 5 N-linked (GlcNAc...) asparagine glycosylation sites follow: N235, N250, N263, N276, and N281. A disulfide bridge connects residues C338 and C344. N-linked (GlcNAc...) asparagine glycosylation occurs at N346. Cysteines 366 and 375 form a disulfide. An N-linked (GlcNAc...) asparagine glycan is attached at N380.

Belongs to the glycosyl hydrolase 28 family.

It localises to the secreted. Pectinolytic enzymes consist of four classes of enzymes: pectine lyase, polygalacturonase, pectin methylesterase and rhamnogalacturonase. Hydrolyzes alpha-D-galacturonopyranosyl-(1,2)-alpha-L-rhamnopyranosyl linkages in the backbone of the hairy regions of pectins. This is Putative rhamnogalacturonase D (rhgD) from Aspergillus niger (strain ATCC MYA-4892 / CBS 513.88 / FGSC A1513).